The primary structure comprises 474 residues: tRNA-2-methylthio-N(6)-dimethylallyladenosine synthase (474 aa).

The MTTase N-terminal domain occupies 3-120; that stretch reads KKLHIKTWGC…LPEMINHVQE (118 aa). Residues Cys12, Cys49, Cys83, Cys157, Cys161, and Cys164 each coordinate [4Fe-4S] cluster. A Radical SAM core domain is found at 143 to 375; it reads RAEGPTAFVS…QQRISQQAME (233 aa). Positions 378–441 constitute a TRAM domain; it reads RKMVGTVQRV…ASSLRGILLR (64 aa).

Belongs to the methylthiotransferase family. MiaB subfamily. Monomer. [4Fe-4S] cluster serves as cofactor.

The protein localises to the cytoplasm. It catalyses the reaction N(6)-dimethylallyladenosine(37) in tRNA + (sulfur carrier)-SH + AH2 + 2 S-adenosyl-L-methionine = 2-methylsulfanyl-N(6)-dimethylallyladenosine(37) in tRNA + (sulfur carrier)-H + 5'-deoxyadenosine + L-methionine + A + S-adenosyl-L-homocysteine + 2 H(+). Catalyzes the methylthiolation of N6-(dimethylallyl)adenosine (i(6)A), leading to the formation of 2-methylthio-N6-(dimethylallyl)adenosine (ms(2)i(6)A) at position 37 in tRNAs that read codons beginning with uridine. This is tRNA-2-methylthio-N(6)-dimethylallyladenosine synthase from Yersinia pseudotuberculosis serotype O:3 (strain YPIII).